The sequence spans 856 residues: Envelope glycoprotein gp150 (856 aa).

Residues 1 to 785 (MAEGFVANGQ…WIGNIPQYLK (785 aa)) are Extracellular-facing. Residues Asn-220, Asn-258, Asn-269, Asn-274, Asn-298, Asn-330, Asn-336, Asn-342, Asn-418, Asn-422, Asn-448, Asn-469, Asn-481, Asn-499, Asn-518, Asn-531, Asn-548, Asn-551, and Asn-556 are each glycosylated (N-linked (GlcNAc...) asparagine; by host). The segment at 616-636 (VMLALATVLSMAGAGTGATAI) is fusion peptide. A coiled-coil region spans residues 643–693 (HQVLATQQEAIEKVTEALKITNLRLVTLEHQVLVIGLKVEAMEKFLYTAFA). An immunosuppression region spans residues 662–680 (ITNLRLVTLEHQVLVIGLK). Asn-717, Asn-721, Asn-729, and Asn-737 each carry an N-linked (GlcNAc...) asparagine; by host glycan. Residues 736–772 (YNQTKDLQKKFYGIIMDIEQNNVQGKKGLQQLQKWED) adopt a coiled-coil conformation. The helical transmembrane segment at 786-806 (GLLGSIVGIGLGILLLILCLP) threads the bilayer. Residues 807-856 (TLVDCIRNCIHKILGYTVIAMPEVDGEEIQPQMELRRNGRQCGMSEKEEE) lie on the Cytoplasmic side of the membrane.

In terms of assembly, the mature envelope protein (Env) consists of a trimer of SU-TM heterodimers attached by noncovalent interactions or by a labile interchain disulfide bond. Specific enzymatic cleavages in vivo yield mature proteins. Envelope glycoproteins are synthesized as an inactive precursor that is N-glycosylated and processed likely by host cell furin or by a furin-like protease in the Golgi to yield the mature SU and TM proteins. The cleavage site between SU and TM requires the minimal sequence [KR]-X-[KR]-R.

It localises to the virion membrane. It is found in the host cell membrane. In terms of biological role, the surface protein (SU) attaches the virus to the host cell by binding to its receptor. This interaction triggers the refolding of the transmembrane protein (TM) and is thought to activate its fusogenic potential by unmasking its fusion peptide. Fusion occurs at the host cell plasma membrane. Functionally, the transmembrane protein (TM) acts as a class I viral fusion protein. Under the current model, the protein has at least 3 conformational states: pre-fusion native state, pre-hairpin intermediate state, and post-fusion hairpin state. During viral and target cell membrane fusion, the coiled coil regions (heptad repeats) assume a trimer-of-hairpins structure, positioning the fusion peptide in close proximity to the C-terminal region of the ectodomain. The formation of this structure appears to drive apposition and subsequent fusion of viral and target cell membranes. Membranes fusion leads to delivery of the nucleocapsid into the cytoplasm. The polypeptide is Envelope glycoprotein gp150 (env) (Feline immunodeficiency virus (strain UT-113) (FIV)).